The chain runs to 848 residues: ATP-dependent RNA helicase dbp10 (848 aa).

The disordered stretch occupies residues 22 to 43; that stretch reads DIATDNQKDKHENVGENVSDED. Positions 69 to 97 match the Q motif motif; the sequence is SNFQSMGLNQTLLRAIFKKGFKAPTPIQR. Residues 100–272 enclose the Helicase ATP-binding domain; it reads IPLLLEGRDV…KAGLQDPVLV (173 aa). 113-120 provides a ligand contact to ATP; sequence ARTGSGKT. The DEAD box motif lies at 220-223; the sequence is DEAD. The 151-residue stretch at 330–480 folds into the Helicase C-terminal domain; the sequence is RKRALELALK…TSSKQVKTDS (151 aa). The disordered stretch occupies residues 610 to 650; that stretch reads NKVKPKGIKSEVASDKITDSSPGNMSEASESELEEVFKNPK. Residues 617–627 are compositionally biased toward basic and acidic residues; sequence IKSEVASDKIT. The span at 628 to 637 shows a compositional bias: polar residues; sequence DSSPGNMSEA. Phosphoserine occurs at positions 638, 733, and 736. Positions 768-813 are disordered; it reads ANDSPIRENKRYKHNKLQTPKPADKFRDNYHKQNKRNREAKERGIG. The span at 789–812 shows a compositional bias: basic and acidic residues; the sequence is PADKFRDNYHKQNKRNREAKERGI.

This sequence belongs to the DEAD box helicase family. DDX54/DBP10 subfamily.

It is found in the nucleus. Its subcellular location is the nucleolus. The catalysed reaction is ATP + H2O = ADP + phosphate + H(+). In terms of biological role, ATP-binding RNA helicase involved in the biogenesis of 60S ribosomal subunits and is required for the normal formation of 25S and 5.8S rRNAs. This chain is ATP-dependent RNA helicase dbp10 (dbp10), found in Schizosaccharomyces pombe (strain 972 / ATCC 24843) (Fission yeast).